The sequence spans 178 residues: Large ribosomal subunit protein uL6 (178 aa).

This sequence belongs to the universal ribosomal protein uL6 family. As to quaternary structure, part of the 50S ribosomal subunit.

This protein binds to the 23S rRNA, and is important in its secondary structure. It is located near the subunit interface in the base of the L7/L12 stalk, and near the tRNA binding site of the peptidyltransferase center. This Francisella tularensis subsp. novicida (strain U112) protein is Large ribosomal subunit protein uL6.